Consider the following 263-residue polypeptide: Endonuclease 8 (263 aa).

The active-site Schiff-base intermediate with DNA is Pro-2. The active-site Proton donor is Glu-3. Catalysis depends on Lys-53, which acts as the Proton donor; for beta-elimination activity. DNA is bound by residues Gln-70, Arg-125, and Asn-169. The FPG-type zinc finger occupies 229 to 263 (KVFHRDGEVCERCGGIIEKTTLSSRPFYWCPHCQK). Residue Arg-253 is the Proton donor; for delta-elimination activity of the active site.

This sequence belongs to the FPG family. Zn(2+) serves as cofactor.

It carries out the reaction 2'-deoxyribonucleotide-(2'-deoxyribose 5'-phosphate)-2'-deoxyribonucleotide-DNA = a 3'-end 2'-deoxyribonucleotide-(2,3-dehydro-2,3-deoxyribose 5'-phosphate)-DNA + a 5'-end 5'-phospho-2'-deoxyribonucleoside-DNA + H(+). Involved in base excision repair of DNA damaged by oxidation or by mutagenic agents. Acts as a DNA glycosylase that recognizes and removes damaged bases. Has a preference for oxidized pyrimidines, such as thymine glycol, 5,6-dihydrouracil and 5,6-dihydrothymine. Has AP (apurinic/apyrimidinic) lyase activity and introduces nicks in the DNA strand. Cleaves the DNA backbone by beta-delta elimination to generate a single-strand break at the site of the removed base with both 3'- and 5'-phosphates. This chain is Endonuclease 8, found in Salmonella newport (strain SL254).